A 246-amino-acid polypeptide reads, in one-letter code: Pyridoxine 5'-phosphate synthase (246 aa).

Residues Asn-8 and Arg-19 each coordinate 3-amino-2-oxopropyl phosphate. His-44 acts as the Proton acceptor in catalysis. 1-deoxy-D-xylulose 5-phosphate contacts are provided by Arg-46 and His-51. Glu-76 serves as the catalytic Proton acceptor. 1-deoxy-D-xylulose 5-phosphate is bound at residue Thr-106. Catalysis depends on His-198, which acts as the Proton donor. Residues Asp-199 and 221 to 222 (GH) contribute to the 3-amino-2-oxopropyl phosphate site.

Belongs to the PNP synthase family. In terms of assembly, homooctamer; tetramer of dimers.

The protein resides in the cytoplasm. The enzyme catalyses 3-amino-2-oxopropyl phosphate + 1-deoxy-D-xylulose 5-phosphate = pyridoxine 5'-phosphate + phosphate + 2 H2O + H(+). Its pathway is cofactor biosynthesis; pyridoxine 5'-phosphate biosynthesis; pyridoxine 5'-phosphate from D-erythrose 4-phosphate: step 5/5. Catalyzes the complicated ring closure reaction between the two acyclic compounds 1-deoxy-D-xylulose-5-phosphate (DXP) and 3-amino-2-oxopropyl phosphate (1-amino-acetone-3-phosphate or AAP) to form pyridoxine 5'-phosphate (PNP) and inorganic phosphate. The polypeptide is Pyridoxine 5'-phosphate synthase (Brucella abortus (strain S19)).